We begin with the raw amino-acid sequence, 570 residues long: Pleckstrin homology domain-containing family D member 1 (570 aa).

The segment covering 1–13 has biased composition (basic and acidic residues); the sequence is MTTKTTPKELKAK. The interval 1–42 is disordered; that stretch reads MTTKTTPKELKAKKESKKKGSAPEPPKNGPPRTSPPNTIEKK. Over residues 23–34 the composition is skewed to pro residues; sequence PEPPKNGPPRTS. In terms of domain architecture, PH spans 83-192; it reads GVQNYGILMK…WLKALRSATK (110 aa). The stretch at 202–448 forms a coiled coil; sequence ETMIRELENR…TGAQMTELQE (247 aa). The segment covering 542-551 has biased composition (basic residues); it reads SKRGIRSSFR. The interval 542 to 570 is disordered; the sequence is SKRGIRSSFRKKTDSITTQPREKEPLMQL. Basic and acidic residues predominate over residues 561 to 570; sequence PREKEPLMQL.

It belongs to the PLEKHD1 family.

The sequence is that of Pleckstrin homology domain-containing family D member 1 from Caenorhabditis elegans.